The chain runs to 348 residues: Lipoyl synthase, mitochondrial (348 aa).

[4Fe-4S] cluster-binding residues include Cys105, Cys110, Cys116, Cys136, Cys140, and Cys143. Residues 121–341 (ETGTATATIM…RTXXLVSYVL (221 aa)) form the Radical SAM core domain.

This sequence belongs to the radical SAM superfamily. Lipoyl synthase family. Requires [4Fe-4S] cluster as cofactor.

The protein localises to the mitochondrion. It carries out the reaction [[Fe-S] cluster scaffold protein carrying a second [4Fe-4S](2+) cluster] + N(6)-octanoyl-L-lysyl-[protein] + 2 oxidized [2Fe-2S]-[ferredoxin] + 2 S-adenosyl-L-methionine + 4 H(+) = [[Fe-S] cluster scaffold protein] + N(6)-[(R)-dihydrolipoyl]-L-lysyl-[protein] + 4 Fe(3+) + 2 hydrogen sulfide + 2 5'-deoxyadenosine + 2 L-methionine + 2 reduced [2Fe-2S]-[ferredoxin]. It functions in the pathway protein modification; protein lipoylation via endogenous pathway; protein N(6)-(lipoyl)lysine from octanoyl-[acyl-carrier-protein]: step 2/2. In terms of biological role, catalyzes the radical-mediated insertion of two sulfur atoms into the C-6 and C-8 positions of the octanoyl moiety bound to the lipoyl domains of lipoate-dependent enzymes, thereby converting the octanoylated domains into lipoylated derivatives. The chain is Lipoyl synthase, mitochondrial (LIP1) from Ricinus communis (Castor bean).